A 234-amino-acid polypeptide reads, in one-letter code: Protein XNDC1N (234 aa).

This chain is Protein XNDC1N, found in Homo sapiens (Human).